Here is a 334-residue protein sequence, read N- to C-terminus: Ferrochelatase (334 aa).

Fe cation is bound by residues His207 and Glu288.

The protein belongs to the ferrochelatase family.

It localises to the cytoplasm. The catalysed reaction is heme b + 2 H(+) = protoporphyrin IX + Fe(2+). The protein operates within porphyrin-containing compound metabolism; protoheme biosynthesis; protoheme from protoporphyrin-IX: step 1/1. Catalyzes the ferrous insertion into protoporphyrin IX. This is Ferrochelatase from Helicobacter pylori (strain ATCC 700392 / 26695) (Campylobacter pylori).